The primary structure comprises 480 residues: Adenosylhomocysteinase (480 aa).

Substrate contacts are provided by T63, D142, and E203. Residue T204–T206 participates in NAD(+) binding. Positions 233 and 237 each coordinate substrate. NAD(+)-binding positions include N238, G267–G272, E290, N325, I346–H348, and N394.

The protein belongs to the adenosylhomocysteinase family. It depends on NAD(+) as a cofactor.

The protein localises to the cytoplasm. It carries out the reaction S-adenosyl-L-homocysteine + H2O = L-homocysteine + adenosine. The protein operates within amino-acid biosynthesis; L-homocysteine biosynthesis; L-homocysteine from S-adenosyl-L-homocysteine: step 1/1. May play a key role in the regulation of the intracellular concentration of adenosylhomocysteine. This is Adenosylhomocysteinase from Xanthomonas euvesicatoria pv. vesicatoria (strain 85-10) (Xanthomonas campestris pv. vesicatoria).